Reading from the N-terminus, the 300-residue chain is D-alanine--D-alanine ligase (300 aa).

One can recognise an ATP-grasp domain in the interval 99 to 293; sequence KKILKYANIN…FAELLNSIVK (195 aa). 126–181 lines the ATP pocket; that stretch reads IEKIGYPVFVKPNSGGSSVATNLVKDKEGIKEAVELALKYDKEVMIENYTKGEEIT. Positions 248, 260, and 262 each coordinate Mg(2+).

This sequence belongs to the D-alanine--D-alanine ligase family. Mg(2+) serves as cofactor. Mn(2+) is required as a cofactor.

Its subcellular location is the cytoplasm. The enzyme catalyses 2 D-alanine + ATP = D-alanyl-D-alanine + ADP + phosphate + H(+). The protein operates within cell wall biogenesis; peptidoglycan biosynthesis. Cell wall formation. This is D-alanine--D-alanine ligase from Clostridium botulinum (strain ATCC 19397 / Type A).